The sequence spans 1871 residues: Plexin-A3 (1871 aa).

The signal sequence occupies residues 1-19 (MPSVCLLLLLFLAVGGALG). The Sema domain maps to 20-488 (NRPFRAFVVT…SEKQVSQLPV (469 aa)). Residues 20-1220 (NRPFRAFVVT…SAERALTLPA (1201 aa)) lie on the Extracellular side of the membrane. N-linked (GlcNAc...) asparagine glycosylation is present at Asn-59. 9 cysteine pairs are disulfide-bonded: Cys-77–Cys-86, Cys-112–Cys-120, Cys-266–Cys-387, Cys-282–Cys-338, Cys-356–Cys-375, Cys-491–Cys-508, Cys-497–Cys-539, Cys-500–Cys-517, and Cys-511–Cys-523. An N-linked (GlcNAc...) asparagine glycan is attached at Asn-548. The cysteines at positions 574 and 594 are disulfide-linked. N-linked (GlcNAc...) asparagine glycans are attached at residues Asn-637, Asn-738, and Asn-746. 4 consecutive IPT/TIG domains span residues 840-933 (PRIT…YSFV), 935-1020 (PTFD…YTYT), 1023-1122 (PTVT…FTYY), and 1125-1211 (PSFE…LHIS). N-linked (GlcNAc...) asparagine glycosylation is found at Asn-1009, Asn-1036, Asn-1073, Asn-1115, and Asn-1162. Residues 1221–1241 (MMGLAAGGGLLLLAITAVLVA) form a helical membrane-spanning segment. Topologically, residues 1242–1871 (YKRKTQDADR…QIISLVSSDS (630 aa)) are cytoplasmic. Position 1596 is a phosphoserine (Ser-1596).

It belongs to the plexin family. As to quaternary structure, interacts with CBFA2T3/MTG16.

The protein localises to the cell membrane. Coreceptor for SEMA3A and SEMA3F. Necessary for signaling by class 3 semaphorins and subsequent remodeling of the cytoskeleton. Plays a role in axon guidance in the developing nervous system. Regulates the migration of sympathetic neurons, but not of neural crest precursors. Required for normal dendrite spine morphology in pyramidal neurons. May play a role in regulating semaphorin-mediated programmed cell death in the developing nervous system. Class 3 semaphorins bind to a complex composed of a neuropilin and a plexin. The plexin modulates the affinity of the complex for specific semaphorins, and its cytoplasmic domain is required for the activation of down-stream signaling events in the cytoplasm. The polypeptide is Plexin-A3 (PLXNA3) (Homo sapiens (Human)).